Reading from the N-terminus, the 361-residue chain is Uroporphyrinogen decarboxylase (361 aa).

Substrate-binding positions include arginine 27 to arginine 31, aspartate 77, tyrosine 154, threonine 209, and histidine 327.

This sequence belongs to the uroporphyrinogen decarboxylase family. In terms of assembly, homodimer.

The protein localises to the cytoplasm. It carries out the reaction uroporphyrinogen III + 4 H(+) = coproporphyrinogen III + 4 CO2. It participates in porphyrin-containing compound metabolism; protoporphyrin-IX biosynthesis; coproporphyrinogen-III from 5-aminolevulinate: step 4/4. Catalyzes the decarboxylation of four acetate groups of uroporphyrinogen-III to yield coproporphyrinogen-III. The protein is Uroporphyrinogen decarboxylase of Coxiella burnetii (strain RSA 331 / Henzerling II).